The chain runs to 164 residues: Pyruvoyl-dependent arginine decarboxylase (164 aa).

A Pyruvic acid (Ser) modification is found at S52.

Belongs to the PdaD family. It depends on pyruvate as a cofactor.

The catalysed reaction is L-arginine + H(+) = agmatine + CO2. The polypeptide is Pyruvoyl-dependent arginine decarboxylase (Methanococcus maripaludis (strain C6 / ATCC BAA-1332)).